A 213-amino-acid polypeptide reads, in one-letter code: Pyridoxine/pyridoxamine 5'-phosphate oxidase (213 aa).

Substrate is bound by residues 8-11 (RREY) and Lys67. FMN is bound by residues 62–67 (RIVLLK), 77–78 (FT), Arg83, Lys84, and Gln106. 3 residues coordinate substrate: Tyr124, Arg128, and Ser132. FMN contacts are provided by residues 141-142 (QS) and Trp186. Residue 192–194 (RLH) coordinates substrate. Arg196 lines the FMN pocket.

This sequence belongs to the pyridoxamine 5'-phosphate oxidase family. As to quaternary structure, homodimer. Requires FMN as cofactor.

The enzyme catalyses pyridoxamine 5'-phosphate + O2 + H2O = pyridoxal 5'-phosphate + H2O2 + NH4(+). The catalysed reaction is pyridoxine 5'-phosphate + O2 = pyridoxal 5'-phosphate + H2O2. It functions in the pathway cofactor metabolism; pyridoxal 5'-phosphate salvage; pyridoxal 5'-phosphate from pyridoxamine 5'-phosphate: step 1/1. It participates in cofactor metabolism; pyridoxal 5'-phosphate salvage; pyridoxal 5'-phosphate from pyridoxine 5'-phosphate: step 1/1. In terms of biological role, catalyzes the oxidation of either pyridoxine 5'-phosphate (PNP) or pyridoxamine 5'-phosphate (PMP) into pyridoxal 5'-phosphate (PLP). This is Pyridoxine/pyridoxamine 5'-phosphate oxidase from Shewanella sediminis (strain HAW-EB3).